Here is a 240-residue protein sequence, read N- to C-terminus: LexA repressor (240 aa).

Positions 26-46 (FDEMKDALDLASKSGIHRLIT) form a DNA-binding region, H-T-H motif. Residues S160 and K198 each act as for autocatalytic cleavage activity in the active site.

The protein belongs to the peptidase S24 family. As to quaternary structure, homodimer.

The catalysed reaction is Hydrolysis of Ala-|-Gly bond in repressor LexA.. In terms of biological role, represses a number of genes involved in the response to DNA damage (SOS response), including recA and lexA. In the presence of single-stranded DNA, RecA interacts with LexA causing an autocatalytic cleavage which disrupts the DNA-binding part of LexA, leading to derepression of the SOS regulon and eventually DNA repair. This chain is LexA repressor, found in Agrobacterium fabrum (strain C58 / ATCC 33970) (Agrobacterium tumefaciens (strain C58)).